A 693-amino-acid polypeptide reads, in one-letter code: Pentatricopeptide repeat-containing protein At2g19280 (693 aa).

PPR repeat units lie at residues 200–234, 235–269, 270–304, 305–339, 340–370, 372–406, 407–441, 442–476, 477–511, 512–546, 547–581, 582–616, and 617–651; these read LETV…GIFP, SRGV…GRHL, NAAV…GIRP, DIVA…GISQ, DSVS…FRLR, NIFV…GLLP, DCVC…GNPP, SLTT…GLKL, DVVT…GISP, DVAT…GFVP, STLA…RMKP, DVVT…GLKP, and DVVL…GMLP.

Belongs to the PPR family. P subfamily.

The chain is Pentatricopeptide repeat-containing protein At2g19280 from Arabidopsis thaliana (Mouse-ear cress).